The primary structure comprises 512 residues: Mucin-13 (512 aa).

Residues 1–18 (MKAIIHLTLLALLSVNTA) form the signal peptide. The Extracellular portion of the chain corresponds to 19 to 421 (TNQGNSADAV…GLDCKDKFQL (403 aa)). Residues 22–38 (GNSADAVTTTETATSGP) show a composition bias toward polar residues. Disordered regions lie at residues 22–67 (GNSA…PTAT) and 133–176 (MVPS…PSNP). The segment covering 53–67 (TASTTANTPSFPTAT) has biased composition (low complexity). The segment covering 135–176 (PSETQSNNEMSPTTEDNQSSGPPTGTALLETSTLNSTGPSNP) has biased composition (polar residues). 2 N-linked (GlcNAc...) asparagine glycosylation sites follow: N151 and N169. In terms of domain architecture, EGF-like 1 spans 173 to 211 (PSNPCQDDPCADNSLCVKLHNTSFCLCLEGYYYNSSTCK). 3 disulfide bridges follow: C177-C188, C182-C197, and C199-C210. Residues N193, N206, N284, and N332 are each glycosylated (N-linked (GlcNAc...) asparagine). The region spanning 212–336 (KGKVFPGKIS…DYYGCNQTAD (125 aa)) is the SEA domain. EGF-like domains follow at residues 322 to 361 (LTLRCDYYGCNQTADDCLNGLACDCKSDLQRPNPQSPFCV) and 363 to 404 (SSLK…GNCQ). 6 disulfides stabilise this stretch: C326-C338, C331-C344, C346-C360, C367-C378, C371-C389, and C391-C403. A helical membrane pass occupies residues 422–442 (ILTIVGTIAGIVILSMIIALI). Over 443 to 512 (VTARSNNKTK…RHSSMPRPDY (70 aa)) the chain is Cytoplasmic. Polar residues predominate over residues 493–505 (RDSQMQNPYSRHS). The disordered stretch occupies residues 493–512 (RDSQMQNPYSRHSSMPRPDY).

Homodimer of beta subunits. Cleaved into two subunits, alpha and beta, probably between the first EGF domain and the SEA domain. Beta subunit contains the cytoplasmic tail and alpha subunit the extracellular tail. The homooligomerization into dimers is dependent on intrachain disulfide bonds. Post-translationally, highly N-glycosylated. As to expression, highly expressed in epithelial tissues, particularly those of the gastrointestinal and respiratory tracts, such as large intestine and trachea, followed by kidney, small intestine, appendix and stomach.

It localises to the cell membrane. The protein resides in the apical cell membrane. Its subcellular location is the secreted. In terms of biological role, epithelial and hemopoietic transmembrane mucin that may play a role in cell signaling. This Homo sapiens (Human) protein is Mucin-13 (MUC13).